The following is a 637-amino-acid chain: Neuroendocrine convertase 2 (637 aa).

The signal sequence occupies residues 1–24 (MEGGCGSQWKAAGFLFCVMVFASA). Positions 25–108 (ERPVFTNHFL…QQEGFDRKKR (84 aa)) are excised as a propeptide. One can recognise a Peptidase S8 domain in the interval 128-452 (QWYLFNTGQA…YGVLDAGAMV (325 aa)). Active-site charge relay system residues include aspartate 166 and histidine 207. 2 disulfides stabilise this stretch: cysteine 224/cysteine 375 and cysteine 316/cysteine 346. Asparagine 374 is a glycosylation site (N-linked (GlcNAc...) asparagine). The active-site Charge relay system is serine 383. The 137-residue stretch at 460 to 596 (TVPERFHCVG…TLMLHGTQSA (137 aa)) folds into the P/Homo B domain. Residues cysteine 467 and cysteine 493 are joined by a disulfide bond. N-linked (GlcNAc...) asparagine glycosylation is found at asparagine 513 and asparagine 523.

It belongs to the peptidase S8 family. Furin subfamily.

The protein resides in the cytoplasmic vesicle. It is found in the secretory vesicle. It localises to the secreted. It carries out the reaction Release of protein hormones and neuropeptides from their precursors, generally by hydrolysis of -Lys-Arg-|- bonds.. Functionally, serine endopeptidase which is involved in the processing of hormone and other protein precursors at sites comprised of pairs of basic amino acid residues. Responsible for the release of glucagon from proglucagon in pancreatic A cells. This Mus musculus (Mouse) protein is Neuroendocrine convertase 2 (Pcsk2).